A 422-amino-acid chain; its full sequence is Protein krasavietz (422 aa).

Positions 1–26 (MSQKTERPVLSGQRIKTRKRDEREKY) are disordered. The W2 domain occupies 244 to 415 (KLHKAQASQE…QSAEEESESE (172 aa)). 3 positions are modified to phosphoserine: Ser407, Ser412, and Ser414.

The protein belongs to the BZW family. Expressed in mushroom bodies.

Functionally, may be involved in memory formation. The chain is Protein krasavietz (kra) from Drosophila melanogaster (Fruit fly).